Here is a 2283-residue protein sequence, read N- to C-terminus: Serine-rich adhesin for platelets (2283 aa).

Positions 1–89 (MSKRQKAFHD…VNMLHDQQAF (89 aa)) are cleaved as a signal peptide. The tract at residues 90–230 (AASDAPLTSE…KTSTTSTSTA (141 aa)) is serine-rich repeat region 1, SRR1. Residues 100–111 (LNTQSETVGNQN) show a composition bias toward polar residues. 3 disordered regions span residues 100–230 (LNTQ…TSTA), 691–721 (NSGNAVTNKSTGLPSGLTFDSTNNTISGTPT), and 751–2255 (NSMS…GLLG). Residues 112–128 (STTIEASTSTADSTSVT) are compositionally biased toward low complexity. Positions 129–140 (KNSSSVQTSNSD) are enriched in polar residues. A compositionally biased stretch (low complexity) spans 149–229 (NVTSTTNSTS…NKTSTTSTST (81 aa)). Residues 231–751 (PVKLRTFSRL…TTFKYEVTRN (521 aa)) are non-repeat region (NRR). Low complexity-rich tracts occupy residues 752 to 1323 (SMSD…SDSI), 1330 to 1894 (SLSA…QSSS), and 1901 to 2225 (DSMS…SATS). The tract at residues 752–2244 (SMSDSVSTSG…AQSEERLPDT (1493 aa)) is serine-rich repeat region 2, SRR2. The short motif at 2241–2245 (LPDTG) is the LPXTG sorting signal element. Threonine 2244 carries the pentaglycyl murein peptidoglycan amidated threonine modification. Residues 2245-2283 (GESIKQNGLLGGIMTLLVGLGLMKRKKKKDENDQDDSQA) constitute a propeptide, removed by sortase.

Belongs to the serine-rich repeat protein (SRRP) family. Proteolytically cleaved by a metalloprotease. In terms of processing, glycosylated. It is probable that most of the Ser residues in SSR1 and SSR2 are O-GlcNAcylated. Sequential glycosylation by sugar transferases are able to generate complex sugar polymorphisms.

It localises to the secreted. The protein localises to the cell wall. Mediates binding to human platelets, possibly through a receptor-ligand interaction. Probably associated with virulence in endovascular infection. The chain is Serine-rich adhesin for platelets (sraP) from Staphylococcus aureus.